Consider the following 396-residue polypeptide: DNA dC-&gt;dU-editing enzyme APOBEC3 (396 aa).

CMP/dCMP-type deaminase domains lie at 38 to 154 and 205 to 324; these read GRKD…AQVA and EEEF…LCSL. Position 71 (H71) interacts with Zn(2+). The active-site Proton donor is E73. Zn(2+) contacts are provided by C105, C108, H255, C283, and C286.

Belongs to the cytidine and deoxycytidylate deaminase family. As to quaternary structure, homodimer. It depends on Zn(2+) as a cofactor.

It is found in the cytoplasm. It carries out the reaction a 2'-deoxycytidine in single-stranded DNA + H2O + H(+) = a 2'-deoxyuridine in single-stranded DNA + NH4(+). In terms of biological role, DNA deaminase (cytidine deaminase) which acts as an inhibitor of retrovirus replication and retrotransposon mobility via deaminase-dependent and -independent mechanisms. Selectively targets single-stranded DNA and does not deaminate double-stranded DNA or single- or double-stranded RNA. This chain is DNA dC-&gt;dU-editing enzyme APOBEC3 (APOBEC3), found in Cricetulus longicaudatus (Long-tailed dwarf hamster).